Reading from the N-terminus, the 1406-residue chain is Receptor-type tyrosine-protein phosphatase eta (1406 aa).

The first 24 residues, 1 to 24 (MRRLPLLPPCPLLLLLLLPAEVRC), serve as a signal peptide directing secretion. The Extracellular segment spans residues 25-1044 (TTACTDDCSL…LPQDPGVIAG (1020 aa)). N-linked (GlcNAc...) asparagine glycosylation is found at N36, N52, N97, N103, N118, N124, N186, N192, N243, N275, N281, N296, N302, N331, N332, N364, N385, N391, N453, N459, N484, N500, N510, N547, N568, N630, N636, N651, N657, N719, N745, N750, N766, N776, N804, and N828. The segment at 39–72 (EEMGTSSNDELSVNATSGNRRLSEDVSLPGRAMS) is disordered. Over residues 41–58 (MGTSSNDELSVNATSGNR) the composition is skewed to polar residues. Fibronectin type-III domains are found at residues 82 to 170 (AVLD…TKPS), 171 to 259 (PVLD…TKPS), 260 to 343 (PVLD…SLNL), 346 to 437 (KPSP…TKPS), 438 to 523 (PVLD…SLYT), 524 to 614 (KPTP…TKPR), 615 to 703 (AVLH…TKPS), 704 to 793 (MVLN…VPSS), 794 to 888 (VNAF…TDPP), and 887 to 979 (PPVP…IVDV). N1010 carries an N-linked (GlcNAc...) asparagine glycan. A helical membrane pass occupies residues 1045 to 1065 (AVIGCLLAILAVVAIGGYIFW). Residues 1066–1406 (RRRRKDKRNT…AFGKANGYHA (341 aa)) are Cytoplasmic-facing. In terms of domain architecture, Tyrosine-protein phosphatase spans 1110 to 1367 (FAEEYEELKS…VFLNQCVMDI (258 aa)). Substrate contacts are provided by residues D1274, 1308 to 1314 (CSAGVGR), and Q1352. C1308 (phosphocysteine intermediate) is an active-site residue.

Belongs to the protein-tyrosine phosphatase family. Receptor class 3 subfamily. In terms of tissue distribution, found on the apical surfaces of retinal Mueller cells, renal tubule cells and intestinal brush border cells.

The protein resides in the cell membrane. The protein localises to the cell projection. It localises to the ruffle membrane. Its subcellular location is the cell junction. It carries out the reaction O-phospho-L-tyrosyl-[protein] + H2O = L-tyrosyl-[protein] + phosphate. Functionally, tyrosine phosphatase which dephosphorylates or contributes to the dephosphorylation of several substrates. Plays a role in cell adhesion, migration, proliferation and differentiation. Has a role in megakaryocytes and platelet formation. May influence the potential of nonsensory supporting cells to either proliferate or differentiate into hair cells. The protein is Receptor-type tyrosine-protein phosphatase eta (PTPRJ) of Gallus gallus (Chicken).